The chain runs to 338 residues: MANHAPFETDISTLTRFVMEQGRKAQGTGELTQLLNSLCTAIKAISSAVRQAGIAQLYGIAGSTNVTGDQVKKLDILSNDLVINMLKSSYATCVLVSEENTNAIIIEPEKRGKYVVCFDPLDGSSNIDCLVSIGTIFGIYRKKSTDEPSEKDALQPGRDLVAAGYALYGSATMLVLAMDCGVNCFMLDPSIGEFIMVDRDVKMKKKGNIYSLNEGYAKDFDPAINEYLQRKKFPPDGSAPYGARYVGSMVADIHRTLVYGGIFLYPANKKSPSGKLRLLYECNPIAYVMEKAGGLATTGDKDILDIVPTEIHQKAPVVMGSSEDVQEFLEIYRKHKAK.

Ala2 bears the N-acetylalanine mark. AMP contacts are provided by residues 18-22 (VMEQG) and 28-32 (TGELT). Mg(2+) contacts are provided by Asp69 and Glu98. 113–114 (KY) is a binding site for AMP. Positions 119, 121, and 122 each coordinate Mg(2+). 122–125 (DGSS) is a substrate binding site. Arg141 contributes to the AMP binding site. Lys151 is subject to N6-succinyllysine. Residues 213–216 (NEGY), 244–249 (RYVGSM), Tyr265, and 275–277 (KLR) contribute to the substrate site. Phosphotyrosine is present on residues Tyr216, Tyr245, and Tyr265. Glu281 contacts Mg(2+).

Belongs to the FBPase class 1 family. As to quaternary structure, homotetramer. It depends on Mg(2+) as a cofactor. Detected in pancreatic beta-cell lines MIN6 and beta-TC and in liver (at protein level). Preferentially expressed in liver, with lower levels detected in pancreatic islets and intestine, and very low levels in blood, muscle, brain and spleen.

The catalysed reaction is beta-D-fructose 1,6-bisphosphate + H2O = beta-D-fructose 6-phosphate + phosphate. It functions in the pathway carbohydrate biosynthesis; gluconeogenesis. Its activity is regulated as follows. Subject to complex allosteric regulation. The enzyme can assume an active R-state, or an inactive T-state. Intermediate conformations may exist. AMP acts as an allosteric inhibitor. AMP binding affects the turnover of bound substrate and not the affinity for substrate. Fructose 2,6-bisphosphate acts as a competitive inhibitor. Fructose 2,6-bisphosphate and AMP have synergistic effects. Catalyzes the hydrolysis of fructose 1,6-bisphosphate to fructose 6-phosphate in the presence of divalent cations, acting as a rate-limiting enzyme in gluconeogenesis. Plays a role in regulating glucose sensing and insulin secretion of pancreatic beta-cells. Appears to modulate glycerol gluconeogenesis in liver. Important regulator of appetite and adiposity; increased expression of the protein in liver after nutrient excess increases circulating satiety hormones and reduces appetite-stimulating neuropeptides and thus seems to provide a feedback mechanism to limit weight gain. In Mus musculus (Mouse), this protein is Fructose-1,6-bisphosphatase 1 (Fbp1).